The sequence spans 801 residues: Conserved oligomeric Golgi complex subunit 4 (801 aa).

The tract at residues 397 to 427 is disordered; sequence IRSPSGDGDDEENEEARQERHRLRKEAKEQK.

This sequence belongs to the COG4 family. As to quaternary structure, component of the conserved oligomeric Golgi complex which is composed of eight different subunits and is required for normal Golgi morphology and localization.

The protein localises to the golgi apparatus membrane. Required for normal Golgi function. The sequence is that of Conserved oligomeric Golgi complex subunit 4 (cogc-4) from Caenorhabditis elegans.